A 362-amino-acid polypeptide reads, in one-letter code: UDP-N-acetylglucosamine--N-acetylmuramyl-(pentapeptide) pyrophosphoryl-undecaprenol N-acetylglucosamine transferase (362 aa).

Residues 14–16 (TGG), Asn-126, Arg-166, Ser-193, and Gln-294 contribute to the UDP-N-acetyl-alpha-D-glucosamine site.

It belongs to the glycosyltransferase 28 family. MurG subfamily.

The protein localises to the cell inner membrane. It catalyses the reaction di-trans,octa-cis-undecaprenyl diphospho-N-acetyl-alpha-D-muramoyl-L-alanyl-D-glutamyl-meso-2,6-diaminopimeloyl-D-alanyl-D-alanine + UDP-N-acetyl-alpha-D-glucosamine = di-trans,octa-cis-undecaprenyl diphospho-[N-acetyl-alpha-D-glucosaminyl-(1-&gt;4)]-N-acetyl-alpha-D-muramoyl-L-alanyl-D-glutamyl-meso-2,6-diaminopimeloyl-D-alanyl-D-alanine + UDP + H(+). It participates in cell wall biogenesis; peptidoglycan biosynthesis. Functionally, cell wall formation. Catalyzes the transfer of a GlcNAc subunit on undecaprenyl-pyrophosphoryl-MurNAc-pentapeptide (lipid intermediate I) to form undecaprenyl-pyrophosphoryl-MurNAc-(pentapeptide)GlcNAc (lipid intermediate II). This Paracoccus denitrificans (strain Pd 1222) protein is UDP-N-acetylglucosamine--N-acetylmuramyl-(pentapeptide) pyrophosphoryl-undecaprenol N-acetylglucosamine transferase.